The chain runs to 613 residues: Autophagy-related protein 22-2 (613 aa).

Residues 1-30 form a disordered region; it reads MAFNSTPPVSPGGEAQQRPPRFPGEDTTPT. Residues 41-61 traverse the membrane as a helical segment; it reads YGIAAEVFAVCGVGSFLPLTL. A glycan (N-linked (GlcNAc...) asparagine) is linked at Asn90. A run of 7 helical transmembrane segments spans residues 120 to 140, 167 to 187, 189 to 209, 278 to 298, 307 to 327, 382 to 402, and 418 to 438; these read SFAM…LISF, LFIF…VVGV, CLGS…ANDP, VGLG…MLFA, ISGT…WFSF, VIIF…VSGT, and VGLL…LWPV. Asn448 carries an N-linked (GlcNAc...) asparagine glycan. 4 helical membrane passes run 453–473, 477–497, 508–528, and 553–573; these read LCIA…IPLF, GVVG…HGLV, FFGL…YAAT, and GFFF…MVNA. The segment at 592–613 is disordered; that stretch reads REHASEYGGPSEEAEGLLARDI.

This sequence belongs to the ATG22 family.

It is found in the vacuole membrane. Vacuolar effluxer which mediate the efflux of amino acids resulting from autophagic degradation. The release of autophagic amino acids allows the maintenance of protein synthesis and viability during nitrogen starvation. The protein is Autophagy-related protein 22-2 (atg22-2) of Aspergillus fumigatus (strain ATCC MYA-4609 / CBS 101355 / FGSC A1100 / Af293) (Neosartorya fumigata).